The sequence spans 1213 residues: A disintegrin and metalloproteinase with thrombospondin motifs 19 (1213 aa).

Positions 1 to 27 (MGKNREMRLTHICCCCLLYQLGFLSNG) are cleaved as a signal peptide. Residues 28-322 (IVSELQFAPD…KIAESGRGKR (295 aa)) constitute a propeptide that is removed on maturation. 2 disordered regions span residues 49–161 (WRRE…PPPA) and 192–215 (FLAP…AASA). The span at 52-71 (EPVDPAGGSGGSADPGWVRG) shows a compositional bias: gly residues. A compositionally biased stretch (acidic residues) spans 110–119 (RPPPPSEGEE). Over residues 120-139 (DEELESQELPRGSSGAAALS) the composition is skewed to low complexity. Over residues 140-155 (PGAPASWQPPPPPQPP) the composition is skewed to pro residues. N-linked (GlcNAc...) asparagine glycosylation is present at Asn266. A Cysteine switch motif is present at residues 298–305 (HYCGIISD). Zn(2+) is bound at residue Cys300. The Peptidase M12B domain occupies 331-551 (YNIETVVVAD…KASNCLLQTN (221 aa)). 11 disulfides stabilise this stretch: Cys407–Cys472, Cys447–Cys454, Cys466–Cys546, Cys505–Cys530, Cys575–Cys599, Cys586–Cys607, Cys594–Cys626, Cys620–Cys631, Cys651–Cys686, Cys655–Cys691, and Cys666–Cys676. His488 serves as a coordination point for Zn(2+). Glu489 is a catalytic residue. His492 and His498 together coordinate Zn(2+). Residues 552–639 (PQSVNSVMVP…ECTSRTSAPE (88 aa)) enclose the Disintegrin domain. The TSP type-1 1 domain maps to 640-692 (HLAGEWSLWSPCSRTCSAGISSRERKCPGLDSEARDCNGPRKQYRICENPPCP). The tract at residues 797–920 (IIKGDFNHTR…PENQSSKAPE (124 aa)) is spacer. 4 N-linked (GlcNAc...) asparagine glycosylation sites follow: Asn803, Asn913, Asn955, and Asn1015. TSP type-1 domains lie at 921–981 (PLFM…NEQP), 982–1043 (CQTR…QDCM), 1045–1089 (VWEA…EDCE), and 1093–1150 (KCYV…QPCN). Disulfide bonds link Cys994–Cys1037, Cys998–Cys1042, and Cys1009–Cys1026. The region spanning 1166-1205 (LTFKCLGDQWPVYCRVIREKNLCQDMRWYQRCCETCRDFY) is the PLAC domain.

Zn(2+) serves as cofactor. Post-translationally, the precursor is cleaved by a furin endopeptidase. Glycosylated. Can be O-fucosylated by POFUT2 on a serine or a threonine residue found within the consensus sequence C1-X(2)-(S/T)-C2-G of the TSP type-1 repeat domains where C1 and C2 are the first and second cysteine residue of the repeat, respectively. Fucosylated repeats can then be further glycosylated by the addition of a beta-1,3-glucose residue by the glucosyltransferase, B3GALTL. Fucosylation mediates the efficient secretion of ADAMTS family members. Can also be C-glycosylated with one or two mannose molecules on tryptophan residues within the consensus sequence W-X-X-W of the TPRs, and N-glycosylated. These other glycosylations can also facilitate secretion. In terms of tissue distribution, expressed in fetal lung, but not in any adult tissues examined. Expression was detected in an osteosarcoma cDNA library.

The protein localises to the secreted. It is found in the extracellular space. Its subcellular location is the extracellular matrix. In Homo sapiens (Human), this protein is A disintegrin and metalloproteinase with thrombospondin motifs 19 (ADAMTS19).